The following is a 1992-amino-acid chain: E3 ubiquitin-protein ligase TRIP12 (1992 aa).

Residues 1 to 10 (MSNRPNNNPG) show a composition bias toward polar residues. 3 disordered regions span residues 1-398 (MSNR…DDSE), 797-817 (QRKP…SKKD), and 938-1080 (SLLT…ASKD). Ser-2 carries the post-translational modification N-acetylserine. A Phosphoserine modification is found at Ser-12. Over residues 18–27 (RNTAGAQPQD) the composition is skewed to polar residues. Residues 48-70 (DPDRANTSERQKTGQVPKKDNSR) show a composition bias toward basic and acidic residues. A phosphoserine mark is found at Ser-77, Ser-85, and Ser-100. Polar residues predominate over residues 78–88 (PDYNRTNSPSS). The segment covering 119–132 (EQQLKSAQSPSTSK) has biased composition (polar residues). Low complexity-rich tracts occupy residues 154-166 (SSCV…SEST) and 175-216 (PTKL…SSTV). Lys-181 is modified (N6-acetyllysine). Residues 280-290 (PGSSKSETSKP) are compositionally biased toward polar residues. Phosphoserine is present on residues Ser-310 and Ser-312. Polar residues predominate over residues 326 to 338 (QKTTGSCASTSRR). The segment covering 346-358 (GAAEARRQEKMAD) has biased composition (basic and acidic residues). 2 stretches are compositionally biased toward polar residues: residues 360–371 (ESNQEAVNSSAA) and 803–812 (LANSNTSGYS). The 88-residue stretch at 749–836 (MLKKGNAQNT…DPELAKSFIK (88 aa)) folds into the WWE domain. At Ser-942 the chain carries Phosphoserine. Positions 948 to 973 (TNGSGSMGSTTSVSSGTATAATHAAA) are enriched in low complexity. 2 positions are modified to phosphoserine: Ser-991 and Ser-997. Residues 1001-1014 (KRKRLPKRGPRRPK) are compositionally biased toward basic residues. Position 1016 is a phosphoserine (Ser-1016). A compositionally biased stretch (basic and acidic residues) spans 1017–1026 (PPRDDDKVDN). Residues 1029–1040 (KSPTTTQSPKSS) are compositionally biased toward low complexity. Ser-1030 bears the Phosphoserine mark. A compositionally biased stretch (polar residues) spans 1041–1062 (FLASLNPKTWGRLSTQSNSNNI). Phosphoserine is present on residues Ser-1317, Ser-1322, Ser-1329, and Ser-1376. The residue at position 1377 (Thr-1377) is a Phosphothreonine. Disordered regions lie at residues 1407–1433 (SNKD…NAKK) and 1568–1587 (TNPE…PRLD). Lys-1425 carries the post-translational modification N6-acetyllysine. A Phosphoserine modification is found at Ser-1427. Positions 1496–1570 (EIIPTSEFIN…AMQRLLDTNP (75 aa)) are K-box. The 108-residue stretch at 1885–1992 (PDHGYTHDSR…REGQQSFHLS (108 aa)) folds into the HECT domain. The active-site Glycyl thioester intermediate is Cys-1959.

It belongs to the UPL family. K-HECT subfamily. As to quaternary structure, interacts with MYC; leading to disrupt interaction with isoform p19ARF/ARF of CDKN2A. Interacts with TRADD; leading to disrupt interaction with isoform p19ARF/ARF of CDKN2A. Interacts with SMARCC1; leading to disrupt interaction with SMARCE1.

It is found in the nucleus. It localises to the nucleoplasm. It carries out the reaction S-ubiquitinyl-[E2 ubiquitin-conjugating enzyme]-L-cysteine + [acceptor protein]-L-lysine = [E2 ubiquitin-conjugating enzyme]-L-cysteine + N(6)-ubiquitinyl-[acceptor protein]-L-lysine.. Its pathway is protein modification; protein ubiquitination. Its function is as follows. E3 ubiquitin-protein ligase involved in ubiquitin fusion degradation (UFD) pathway and regulation of DNA repair. Part of the ubiquitin fusion degradation (UFD) pathway, a process that mediates ubiquitination of protein at their N-terminus, regardless of the presence of lysine residues in target proteins. Acts as a key regulator of DNA damage response by acting as a suppressor of RNF168, an E3 ubiquitin-protein ligase that promotes accumulation of 'Lys-63'-linked histone H2A and H2AX at DNA damage sites, thereby acting as a guard against excessive spreading of ubiquitinated chromatin at damaged chromosomes. In normal cells, mediates ubiquitination and degradation of isoform p19ARF/ARF of CDKN2A, a lysine-less tumor suppressor required for p53/TP53 activation under oncogenic stress. In cancer cells, however, isoform p19ARF/ARF and TRIP12 are located in different cell compartments, preventing isoform p19ARF/ARF ubiquitination and degradation. Does not mediate ubiquitination of isoform p16-INK4a of CDKN2A. Also catalyzes ubiquitination of NAE1 and SMARCE1, leading to their degradation. Ubiquitination and degradation of target proteins is regulated by interaction with proteins such as MYC, TRADD or SMARCC1, which disrupt the interaction between TRIP12 and target proteins. Mediates ubiquitination of ASXL1: following binding to N(6)-methyladenosine methylated DNA, ASXL1 is ubiquitinated by TRIP12, leading to its degradation and subsequent inactivation of the PR-DUB complex. This is E3 ubiquitin-protein ligase TRIP12 (TRIP12) from Homo sapiens (Human).